The primary structure comprises 371 residues: Cytochrome b (371 aa).

Transmembrane regions (helical) follow at residues 25 to 45, 69 to 90, 105 to 125, and 170 to 190; these read FGSMLLSCLMLQVTTGFFLAV, WMMQNTHAIGASLFFICIYIHI, WMSGTTLLITLMATAFFGYIL, and FFALHFILPFIIISLSSLHIL. The heme b site is built by His-75 and His-89. His-174 and His-188 together coordinate heme b. A ubiquinone is bound at residue His-193. The next 4 helical transmembrane spans lie at 218–238, 280–300, 312–332, and 339–358; these read YKDLLLLTLLLTLLLLTTFFL, LGGALALVASILIIMTMPFTH, MSQLMFWTLISTFMTITWAAT, and FMMISQTASMIYFMFFISNP.

This sequence belongs to the cytochrome b family. As to quaternary structure, the cytochrome bc1 complex contains 3 respiratory subunits (MT-CYB, CYC1 and UQCRFS1), 2 core proteins (UQCRC1 and UQCRC2) and probably 6 low-molecular weight proteins. It depends on heme b as a cofactor.

The protein resides in the mitochondrion inner membrane. Its function is as follows. Component of the ubiquinol-cytochrome c reductase complex (complex III or cytochrome b-c1 complex) that is part of the mitochondrial respiratory chain. The b-c1 complex mediates electron transfer from ubiquinol to cytochrome c. Contributes to the generation of a proton gradient across the mitochondrial membrane that is then used for ATP synthesis. In Casarea dussumieri (Round Island keel-scaled boa), this protein is Cytochrome b (MT-CYB).